The chain runs to 261 residues: Small ribosomal subunit protein uS2 (261 aa).

The interval 222 to 261 (GKALREQDGEANEEQPISEEEKKEVLEEAMSEEDFEGDKE) is disordered. Composition is skewed to acidic residues over residues 230–239 (GEANEEQPIS) and 248–261 (EEAM…GDKE).

This sequence belongs to the universal ribosomal protein uS2 family.

The protein is Small ribosomal subunit protein uS2 of Campylobacter lari (strain RM2100 / D67 / ATCC BAA-1060).